Here is a 418-residue protein sequence, read N- to C-terminus: Homoaconitase large subunit (418 aa).

[4Fe-4S] cluster contacts are provided by Cys-292, Cys-352, and Cys-355.

This sequence belongs to the aconitase/IPM isomerase family. In terms of assembly, heterodimer of HacA and HacB. Requires [4Fe-4S] cluster as cofactor.

The catalysed reaction is (2R,3S)-homoisocitrate = cis-homoaconitate + H2O. It participates in amino-acid biosynthesis; L-lysine biosynthesis via AAA pathway; L-alpha-aminoadipate from 2-oxoglutarate: step 3/5. With respect to regulation, is not inhibited by lysine. In terms of biological role, catalyzes the reversible hydration of cis-homoaconitate ((Z)-but-1-ene-1,2,4-tricarboxylate) to homoisocitrate ((1R,2S)-1-hydroxybutane-1,2,4-tricarboxylate). Can catalyze neither the dehydration of (R)-homocitrate ((2R)-2-hydroxybutane-1,2,4-tricarboxylate) into cis-homoaconitate in vitro, nor the reverse reaction. Is not active toward (S)-homocitrate, cis-aconitate or citrate as substrate. The sequence is that of Homoaconitase large subunit (hacA) from Thermus thermophilus (strain ATCC BAA-163 / DSM 7039 / HB27).